The primary structure comprises 1196 residues: DNA-directed RNA polymerase subunit beta (1196 aa).

Acidic residues predominate over residues 1152–1165 (EEEIEMRDLEDEED). The tract at residues 1152-1196 (EEEIEMRDLEDEEDAKQADGLALSGDEAPEETASPDVERDAVTKE) is disordered. Basic and acidic residues predominate over residues 1187–1196 (DVERDAVTKE).

This sequence belongs to the RNA polymerase beta chain family. In terms of assembly, the RNAP catalytic core consists of 2 alpha, 1 beta, 1 beta' and 1 omega subunit. When a sigma factor is associated with the core the holoenzyme is formed, which can initiate transcription.

It carries out the reaction RNA(n) + a ribonucleoside 5'-triphosphate = RNA(n+1) + diphosphate. In terms of biological role, DNA-dependent RNA polymerase catalyzes the transcription of DNA into RNA using the four ribonucleoside triphosphates as substrates. The polypeptide is DNA-directed RNA polymerase subunit beta (Bacillus velezensis (strain DSM 23117 / BGSC 10A6 / LMG 26770 / FZB42) (Bacillus amyloliquefaciens subsp. plantarum)).